An 83-amino-acid polypeptide reads, in one-letter code: Large ribosomal subunit protein uL23 (83 aa).

Belongs to the universal ribosomal protein uL23 family. As to quaternary structure, part of the 50S ribosomal subunit. Contacts protein L29.

In terms of biological role, binds to 23S rRNA. One of the proteins that surrounds the polypeptide exit tunnel on the outside of the ribosome. This chain is Large ribosomal subunit protein uL23, found in Thermoplasma volcanium (strain ATCC 51530 / DSM 4299 / JCM 9571 / NBRC 15438 / GSS1).